Consider the following 129-residue polypeptide: Putative F-box protein At3g42722 (129 aa).

The 47-residue stretch at 4–50 (MASIDCLPDELLVGILSFILTNEAASTSILSKRWRTLFAFSHNLDCN) folds into the F-box domain.

This Arabidopsis thaliana (Mouse-ear cress) protein is Putative F-box protein At3g42722.